Reading from the N-terminus, the 689-residue chain is Protein asunder (689 aa).

The stretch at 521-550 (NGARLKLSKAKDQYRLLYRELEQLIQLNAT) forms a coiled coil. Disordered stretches follow at residues 591 to 619 (SPER…SKRR) and 669 to 689 (KDAV…SVRS). Low complexity predominate over residues 599-614 (SSVGASGSSNSNSLLK). Residues 613 to 619 (LKASKRR) carry the Nuclear localization signal (NLS) motif.

It belongs to the Integrator subunit 13 family. As to quaternary structure, belongs to the multiprotein complex Integrator, at least composed of IntS1, IntS2, IntS3, IntS4, omd/IntS5, IntS6, defl/IntS7, IntS8, IntS9, IntS10, IntS11, IntS12, asun/IntS13, IntS14 and IntS15. The core complex associates with protein phosphatase 2A subunits mts/PP2A and Pp2A-29B, to form the Integrator-PP2A (INTAC) complex. Post-translationally, phosphorylated.

The protein localises to the nucleus. It localises to the cytoplasm. The protein resides in the perinuclear region. Functionally, component of the integrator complex, a multiprotein complex that terminates RNA polymerase II (Pol II) transcription in the promoter-proximal region of genes. The integrator complex provides a quality checkpoint during transcription elongation by driving premature transcription termination of transcripts that are unfavorably configured for transcriptional elongation: the complex terminates transcription by (1) catalyzing dephosphorylation of the C-terminal domain (CTD) of Pol II subunit Polr2A/Rbp1 and Spt5, and (2) degrading the exiting nascent RNA transcript via endonuclease activity. The integrator complex is also involved in the 3'-end processing of the U7 snRNA, and also the spliceosomal snRNAs U1, U2, U4 and U5. This Drosophila simulans (Fruit fly) protein is Protein asunder (asun).